The primary structure comprises 368 residues: Methionine import ATP-binding protein MetN (368 aa).

Positions 1–14 (MASDAQPSVDQPSA) are enriched in polar residues. The segment at 1 to 27 (MASDAQPSVDQPSAGTPGATGNSTGTT) is disordered. The span at 15-27 (GTPGATGNSTGTT) shows a compositional bias: low complexity. One can recognise an ABC transporter domain in the interval 31–270 (IVFRDVTKIF…PQTKTAANFV (240 aa)). 67–74 (GYSGAGKS) lines the ATP pocket.

It belongs to the ABC transporter superfamily. Methionine importer (TC 3.A.1.24) family. In terms of assembly, the complex is composed of two ATP-binding proteins (MetN), two transmembrane proteins (MetI) and a solute-binding protein (MetQ).

It is found in the cell membrane. It catalyses the reaction L-methionine(out) + ATP + H2O = L-methionine(in) + ADP + phosphate + H(+). The enzyme catalyses D-methionine(out) + ATP + H2O = D-methionine(in) + ADP + phosphate + H(+). Its function is as follows. Part of the ABC transporter complex MetNIQ involved in methionine import. Responsible for energy coupling to the transport system. The chain is Methionine import ATP-binding protein MetN from Corynebacterium jeikeium (strain K411).